Reading from the N-terminus, the 931-residue chain is Short transient receptor potential channel 6 (931 aa).

The tract at residues 1-24 is disordered; it reads MNQSPAAFGPRRGGSPAVVAGAGA. Topologically, residues 1-406 are cytoplasmic; that stretch reads MNQSPAAFGP…GLRQQTMAVK (406 aa). A compositionally biased stretch (low complexity) spans 13-24; sequence GGSPAVVAGAGA. ANK repeat units follow at residues 131–160, 162–188, and 217–246; these read MGQNALQLAVANEHLEITELLLKKENLSRV, DALLLAISKGYVRIVEAILSHPAFAEG, and HDVTPIILAAHCQEYEIVHTLLRKGARIER. The helical transmembrane segment at 407 to 427 threads the bilayer; it reads FLVVLAVAVGLPFLALVYWFA. Topologically, residues 428–438 are extracellular; sequence PCSKMGKIMRG. Residues 439–459 traverse the membrane as a helical segment; the sequence is PFMKFVAHAASFTIFLGLLVM. At 460–487 the chain is on the cytoplasmic side; it reads NAADRFEGTKILPNETSTDHAKQLFRMK. The helical transmembrane segment at 488–508 threads the bilayer; it reads TSCFSWMEMLIISWVIGMIWA. Residues 509-521 lie on the Extracellular side of the membrane; that stretch reads ECKEIWTQGPKEY. The helical transmembrane segment at 522–542 threads the bilayer; the sequence is LFELWNMLDFGMLAIFAASFI. At 543-592 the chain is on the cytoplasmic side; sequence ARFMAFWHASKAQSIIDANDTLKDLTKVTLGDNVKYYNLARIKWDPSDPQ. The helical transmembrane segment at 593–613 threads the bilayer; it reads IISEGLYAIAVVLSFSRIAYI. The Extracellular portion of the chain corresponds to 614 to 636; sequence LPANESFGPLQISLGRTVKDIFK. A glycan (N-linked (GlcNAc...) asparagine) is linked at Asn617. An ANK 4 repeat occupies 618 to 647; it reads ESFGPLQISLGRTVKDIFKFMVIFIMVFVA. A helical membrane pass occupies residues 637-657; that stretch reads FMVIFIMVFVAFMIGMFNLYS. The Cytoplasmic segment spans residues 658-674; it reads YYIGAKQNEAFTTVEES. A helical transmembrane segment spans residues 675–695; the sequence is FKTLFWAIFGLSEVKSVVINY. Over 696–706 the chain is Extracellular; that stretch reads NHKFIENIGYV. A helical membrane pass occupies residues 707-727; that stretch reads LYGVYNVTMVIVLLNMLIAMI. Topologically, residues 728 to 931 are cytoplasmic; sequence NSSFQEIEDD…MEPNQEESNR (204 aa). Residue Ser815 is modified to Phosphoserine.

This sequence belongs to the transient receptor (TC 1.A.4) family. STrpC subfamily. TRPC6 sub-subfamily. Homodimer; forms channel complex. Interacts with MX1 and RNF24. In terms of processing, phosphorylated by FYN, leading to an increase of TRPC6 channel activity.

It localises to the cell membrane. It carries out the reaction Ca(2+)(in) = Ca(2+)(out). In terms of biological role, thought to form a receptor-activated non-selective calcium permeant cation channel. Probably is operated by a phosphatidylinositol second messenger system activated by receptor tyrosine kinases or G-protein coupled receptors. Activated by diacylglycerol (DAG) in a membrane-delimited fashion, independently of protein kinase C. Seems not to be activated by intracellular calcium store depletion. The polypeptide is Short transient receptor potential channel 6 (Bos taurus (Bovine)).